Here is a 502-residue protein sequence, read N- to C-terminus: ATP synthase subunit alpha (502 aa).

Positions Val115–Asp138 are disordered. Gly169–Thr176 is an ATP binding site.

It belongs to the ATPase alpha/beta chains family. As to quaternary structure, F-type ATPases have 2 components, CF(1) - the catalytic core - and CF(0) - the membrane proton channel. CF(1) has five subunits: alpha(3), beta(3), gamma(1), delta(1), epsilon(1). CF(0) has three main subunits: a(1), b(2) and c(9-12). The alpha and beta chains form an alternating ring which encloses part of the gamma chain. CF(1) is attached to CF(0) by a central stalk formed by the gamma and epsilon chains, while a peripheral stalk is formed by the delta and b chains.

It localises to the cell membrane. The catalysed reaction is ATP + H2O + 4 H(+)(in) = ADP + phosphate + 5 H(+)(out). Produces ATP from ADP in the presence of a proton gradient across the membrane. The alpha chain is a regulatory subunit. This Geobacillus sp. (strain WCH70) protein is ATP synthase subunit alpha.